Consider the following 469-residue polypeptide: Uronate isomerase (469 aa).

It belongs to the metallo-dependent hydrolases superfamily. Uronate isomerase family.

It catalyses the reaction D-glucuronate = D-fructuronate. It carries out the reaction aldehydo-D-galacturonate = keto-D-tagaturonate. Its pathway is carbohydrate metabolism; pentose and glucuronate interconversion. The protein is Uronate isomerase of Yersinia enterocolitica serotype O:8 / biotype 1B (strain NCTC 13174 / 8081).